The chain runs to 292 residues: UPF0749 protein Mb1856 (292 aa).

A signal peptide spans M1–A28. A disordered region spans residues M1–D30. 3 consecutive transmembrane segments (helical) span residues V68–V88, A152–I172, and V229–M249.

The protein belongs to the UPF0749 family.

The protein localises to the cell membrane. The chain is UPF0749 protein Mb1856 from Mycobacterium bovis (strain ATCC BAA-935 / AF2122/97).